The chain runs to 173 residues: Photosystem I assembly protein Ycf3 (173 aa).

TPR repeat units follow at residues 35–68 (AYIY…EENK), 72–105 (GETL…NPKQ), and 120–153 (GRNA…YPGG).

It belongs to the Ycf3 family.

The protein localises to the cellular thylakoid membrane. Its function is as follows. Essential for the assembly of the photosystem I (PSI) complex. May act as a chaperone-like factor to guide the assembly of the PSI subunits. This Prochlorococcus marinus (strain MIT 9312) protein is Photosystem I assembly protein Ycf3.